The chain runs to 116 residues: uncharacterized protein (116 aa).

It belongs to the mimivirus L15/L51/R83 family.

This is an uncharacterized protein from Acanthamoeba polyphaga mimivirus (APMV).